Here is a 532-residue protein sequence, read N- to C-terminus: Cytochrome P450 monooxygenase criE (532 aa).

A helical transmembrane segment spans residues 18–38 (VSPAALSWAVVAVYIGTFFWL). C441 serves as a coordination point for heme.

Belongs to the cytochrome P450 family. Heme serves as cofactor.

The protein localises to the membrane. The enzyme catalyses preechinulin + reduced [NADPH--hemoprotein reductase] + O2 = neoechinulin A + oxidized [NADPH--hemoprotein reductase] + 2 H2O + H(+). The protein operates within secondary metabolite biosynthesis. It participates in alkaloid biosynthesis. Functionally, cytochrome P450 monooxygenase; part of the gene cluster that mediates the biosynthesis of echinulin family alkaloid. The pathway begins with the biosynthesis of the cyclic dipeptide cyclo-L-Trp-L-Ala (cyclo-TA) by the NRPS criC via condensation of L-alanine and L-tryptophan. The prenyltransferase criA then catalyzes the first prenylation step, a reverse prenylation reaction at C2, to yield preechinulin. Preechinulin is the substrate of the cytochrome P450 monooxygenase criE that catalyzes the formation of the double bond between C10 and C11 to produce neoechulin A. The unique prenyltransferase criF functions as a competitive enzyme with criE for preechinulin metabolization and uses preechinulin for effective regiospecific prenylations. Preechinulin is prenylated by criF at C5 or C7. C7-prenylation leads to accumulation of tardioxopiperazine B without further modification by criF. In contrast, the C5-prenylated tardioxopiperazine A can be prenylated again by criF, predominantly at C7 to form echinulin or less frequently at C4 to give variecolorin L. CriF also accepts neoechilunin A to produce varlecolorin G (prenylation at C5) or isoechinulin A (prenylation at C7). CriF further converts isoechinulin A into dehydroechinulin. Moreover, a yet unidentified enzyme can also convert neoechilunin A into neoechilunin B by introducing a double bond between positions C14 and C17 and thus provides a further substrate to criF for C5 and C7 prenylation. The polypeptide is Cytochrome P450 monooxygenase criE (Aspergillus cristatus (Chinese Fuzhuan brick tea-fermentation fungus)).